We begin with the raw amino-acid sequence, 281 residues long: Pantothenate synthetase (281 aa).

ATP is bound at residue 30-37; that stretch reads MGYLHEGH. H37 (proton donor) is an active-site residue. Q61 is a (R)-pantoate binding site. Q61 lines the beta-alanine pocket. 147–150 contributes to the ATP binding site; sequence GEKD. Q153 provides a ligand contact to (R)-pantoate. Residues I176 and 184-187 each bind ATP; that span reads KSSR.

The protein belongs to the pantothenate synthetase family. Homodimer.

It is found in the cytoplasm. The enzyme catalyses (R)-pantoate + beta-alanine + ATP = (R)-pantothenate + AMP + diphosphate + H(+). The protein operates within cofactor biosynthesis; (R)-pantothenate biosynthesis; (R)-pantothenate from (R)-pantoate and beta-alanine: step 1/1. Functionally, catalyzes the condensation of pantoate with beta-alanine in an ATP-dependent reaction via a pantoyl-adenylate intermediate. The protein is Pantothenate synthetase of Clostridium botulinum (strain ATCC 19397 / Type A).